Consider the following 238-residue polypeptide: 1-(5-phosphoribosyl)-5-[(5-phosphoribosylamino)methylideneamino] imidazole-4-carboxamide isomerase (238 aa).

D8 serves as the catalytic Proton acceptor. D129 acts as the Proton donor in catalysis.

This sequence belongs to the HisA/HisF family.

The protein resides in the cytoplasm. The catalysed reaction is 1-(5-phospho-beta-D-ribosyl)-5-[(5-phospho-beta-D-ribosylamino)methylideneamino]imidazole-4-carboxamide = 5-[(5-phospho-1-deoxy-D-ribulos-1-ylimino)methylamino]-1-(5-phospho-beta-D-ribosyl)imidazole-4-carboxamide. It functions in the pathway amino-acid biosynthesis; L-histidine biosynthesis; L-histidine from 5-phospho-alpha-D-ribose 1-diphosphate: step 4/9. The chain is 1-(5-phosphoribosyl)-5-[(5-phosphoribosylamino)methylideneamino] imidazole-4-carboxamide isomerase from Anaeromyxobacter dehalogenans (strain 2CP-C).